A 135-amino-acid polypeptide reads, in one-letter code: S-adenosylmethionine decarboxylase proenzyme (135 aa).

The Schiff-base intermediate with substrate; via pyruvic acid role is filled by Ser-64. Pyruvic acid (Ser); by autocatalysis is present on Ser-64. The active-site Proton acceptor; for processing activity is the His-69. The active-site Proton donor; for catalytic activity is Cys-84.

This sequence belongs to the prokaryotic AdoMetDC family. Type 1 subfamily. As to quaternary structure, heterotetramer of two alpha and two beta chains arranged as a dimer of alpha/beta heterodimers. Pyruvate is required as a cofactor. Is synthesized initially as an inactive proenzyme. Formation of the active enzyme involves a self-maturation process in which the active site pyruvoyl group is generated from an internal serine residue via an autocatalytic post-translational modification. Two non-identical subunits are generated from the proenzyme in this reaction, and the pyruvate is formed at the N-terminus of the alpha chain, which is derived from the carboxyl end of the proenzyme. The post-translation cleavage follows an unusual pathway, termed non-hydrolytic serinolysis, in which the side chain hydroxyl group of the serine supplies its oxygen atom to form the C-terminus of the beta chain, while the remainder of the serine residue undergoes an oxidative deamination to produce ammonia and the pyruvoyl group blocking the N-terminus of the alpha chain.

The catalysed reaction is S-adenosyl-L-methionine + H(+) = S-adenosyl 3-(methylsulfanyl)propylamine + CO2. The protein operates within amine and polyamine biosynthesis; S-adenosylmethioninamine biosynthesis; S-adenosylmethioninamine from S-adenosyl-L-methionine: step 1/1. In terms of biological role, catalyzes the decarboxylation of S-adenosylmethionine to S-adenosylmethioninamine (dcAdoMet), the propylamine donor required for the synthesis of the polyamines spermine and spermidine from the diamine putrescine. This is S-adenosylmethionine decarboxylase proenzyme from Aquifex aeolicus (strain VF5).